Consider the following 506-residue polypeptide: Maturase K (506 aa).

Belongs to the intron maturase 2 family. MatK subfamily.

It is found in the plastid. It localises to the chloroplast. In terms of biological role, usually encoded in the trnK tRNA gene intron. Probably assists in splicing its own and other chloroplast group II introns. In Lathyrus aphaca (Yellow vetchling), this protein is Maturase K.